Reading from the N-terminus, the 421-residue chain is Phosphoribosylamine--glycine ligase (421 aa).

The ATP-grasp domain maps to 108 to 314; it reads KEIMVKYNVP…FAQNIDDIMM (207 aa). Position 134–195 (134–195) interacts with ATP; the sequence is IEEQGAPIVV…EEFLDGEEFS (62 aa). 2 residues coordinate Mg(2+): glutamate 284 and asparagine 286.

This sequence belongs to the GARS family. It depends on Mg(2+) as a cofactor. Mn(2+) serves as cofactor.

The enzyme catalyses 5-phospho-beta-D-ribosylamine + glycine + ATP = N(1)-(5-phospho-beta-D-ribosyl)glycinamide + ADP + phosphate + H(+). The protein operates within purine metabolism; IMP biosynthesis via de novo pathway; N(1)-(5-phospho-D-ribosyl)glycinamide from 5-phospho-alpha-D-ribose 1-diphosphate: step 2/2. This is Phosphoribosylamine--glycine ligase from Streptococcus pyogenes serotype M6 (strain ATCC BAA-946 / MGAS10394).